Reading from the N-terminus, the 757-residue chain is Probable ubiquitin carboxyl-terminal hydrolase MINDY-4 (757 aa).

Disordered stretches follow at residues 152 to 173 and 190 to 334; these read FVSS…GETP and SLDV…LPGG. A compositionally biased stretch (basic and acidic residues) spans 190 to 201; the sequence is SLDVKRMGENSR. 2 positions are modified to phosphoserine: Ser219 and Ser223. The span at 232–242 shows a compositional bias: low complexity; sequence SSPSSSSTQPQ. Over residues 254 to 277 the composition is skewed to polar residues; that stretch reads CTQQDILASSNSSPSRTSLGQLSE. Residue Ser289 is modified to Phosphoserine. Residues 299–310 are compositionally biased toward basic and acidic residues; sequence PPWDRARPRDPS. Catalysis depends on Cys456, which acts as the Nucleophile. His677 functions as the Proton acceptor in the catalytic mechanism.

It belongs to the MINDY deubiquitinase family. FAM188 subfamily.

The enzyme catalyses Thiol-dependent hydrolysis of ester, thioester, amide, peptide and isopeptide bonds formed by the C-terminal Gly of ubiquitin (a 76-residue protein attached to proteins as an intracellular targeting signal).. Its function is as follows. Probable hydrolase that can remove 'Lys-48'-linked conjugated ubiquitin from proteins. The chain is Probable ubiquitin carboxyl-terminal hydrolase MINDY-4 from Homo sapiens (Human).